An 85-amino-acid chain; its full sequence is Sec-independent protein translocase protein TatA (85 aa).

A helical transmembrane segment spans residues Met-1 to Gly-21. Residues Val-43–Asp-85 form a disordered region. The span at Gln-56–Gly-73 shows a compositional bias: polar residues.

This sequence belongs to the TatA/E family. As to quaternary structure, the Tat system comprises two distinct complexes: a TatABC complex, containing multiple copies of TatA, TatB and TatC subunits, and a separate TatA complex, containing only TatA subunits. Substrates initially bind to the TatABC complex, which probably triggers association of the separate TatA complex to form the active translocon.

Its subcellular location is the cell inner membrane. Part of the twin-arginine translocation (Tat) system that transports large folded proteins containing a characteristic twin-arginine motif in their signal peptide across membranes. TatA could form the protein-conducting channel of the Tat system. The sequence is that of Sec-independent protein translocase protein TatA from Azotobacter vinelandii (strain DJ / ATCC BAA-1303).